A 420-amino-acid chain; its full sequence is Serine--tRNA ligase (420 aa).

Position 229–231 (229–231 (TAE)) interacts with L-serine. 260–262 (RAE) contacts ATP. Glutamate 283 provides a ligand contact to L-serine. 347-350 (EISS) serves as a coordination point for ATP. Serine 382 serves as a coordination point for L-serine.

It belongs to the class-II aminoacyl-tRNA synthetase family. Type-1 seryl-tRNA synthetase subfamily. As to quaternary structure, homodimer. The tRNA molecule binds across the dimer.

The protein resides in the cytoplasm. It catalyses the reaction tRNA(Ser) + L-serine + ATP = L-seryl-tRNA(Ser) + AMP + diphosphate + H(+). It carries out the reaction tRNA(Sec) + L-serine + ATP = L-seryl-tRNA(Sec) + AMP + diphosphate + H(+). Its pathway is aminoacyl-tRNA biosynthesis; selenocysteinyl-tRNA(Sec) biosynthesis; L-seryl-tRNA(Sec) from L-serine and tRNA(Sec): step 1/1. Catalyzes the attachment of serine to tRNA(Ser). Is also able to aminoacylate tRNA(Sec) with serine, to form the misacylated tRNA L-seryl-tRNA(Sec), which will be further converted into selenocysteinyl-tRNA(Sec). The chain is Serine--tRNA ligase from Caldicellulosiruptor saccharolyticus (strain ATCC 43494 / DSM 8903 / Tp8T 6331).